Reading from the N-terminus, the 122-residue chain is Holo-[acyl-carrier-protein] synthase (122 aa).

Residues Asp9 and Glu58 each coordinate Mg(2+).

Belongs to the P-Pant transferase superfamily. AcpS family. Mg(2+) serves as cofactor.

The protein localises to the cytoplasm. It catalyses the reaction apo-[ACP] + CoA = holo-[ACP] + adenosine 3',5'-bisphosphate + H(+). Functionally, transfers the 4'-phosphopantetheine moiety from coenzyme A to a Ser of acyl-carrier-protein. In Chlamydia pneumoniae (Chlamydophila pneumoniae), this protein is Holo-[acyl-carrier-protein] synthase.